Consider the following 885-residue polypeptide: Protein arg11, mitochondrial (885 aa).

The N-terminal 59 residues, 1-59 (MLIELQQIVKSGLVRNGAKHCTKRSLLCSNASVIASKRFQGSFAPGQQQPLNPLAKPIE), are a transit peptide targeting the mitochondrion. One can recognise an N-acetyltransferase domain in the interval 346–499 (FVINKHDSLD…SDKPFADAII (154 aa)). Residues 503 to 523 (STKPPTASSTTNNPSSSQINQ) show a composition bias toward low complexity. The disordered stretch occupies residues 503 to 532 (STKPPTASSTTNNPSSSQINQKRSYSTSSL). Cys703 is an active-site residue.

In the N-terminal section; belongs to the acetylglutamate kinase family. The protein in the C-terminal section; belongs to the NAGSA dehydrogenase family. The protein precursor is probably cleaved into the two biologically active enzymes, the kinase and the reductase.

It localises to the mitochondrion. It catalyses the reaction N-acetyl-L-glutamate 5-semialdehyde + phosphate + NADP(+) = N-acetyl-L-glutamyl 5-phosphate + NADPH + H(+). The catalysed reaction is N-acetyl-L-glutamate + ATP = N-acetyl-L-glutamyl 5-phosphate + ADP. The protein operates within amino-acid biosynthesis; L-arginine biosynthesis; N(2)-acetyl-L-ornithine from L-glutamate: step 2/4. It participates in amino-acid biosynthesis; L-arginine biosynthesis; N(2)-acetyl-L-ornithine from L-glutamate: step 3/4. The kinase activity is inhibited by arginine. This is Protein arg11, mitochondrial (arg11) from Schizosaccharomyces pombe (strain 972 / ATCC 24843) (Fission yeast).